A 198-amino-acid chain; its full sequence is FMN-dependent NADH:quinone oxidoreductase (198 aa).

FMN is bound by residues 92-95 and 136-139; these read MWNL and SRGG.

This sequence belongs to the azoreductase type 1 family. As to quaternary structure, homodimer. FMN is required as a cofactor.

It carries out the reaction 2 a quinone + NADH + H(+) = 2 a 1,4-benzosemiquinone + NAD(+). It catalyses the reaction N,N-dimethyl-1,4-phenylenediamine + anthranilate + 2 NAD(+) = 2-(4-dimethylaminophenyl)diazenylbenzoate + 2 NADH + 2 H(+). In terms of biological role, quinone reductase that provides resistance to thiol-specific stress caused by electrophilic quinones. Functionally, also exhibits azoreductase activity. Catalyzes the reductive cleavage of the azo bond in aromatic azo compounds to the corresponding amines. The sequence is that of FMN-dependent NADH:quinone oxidoreductase from Clostridium perfringens (strain ATCC 13124 / DSM 756 / JCM 1290 / NCIMB 6125 / NCTC 8237 / Type A).